The primary structure comprises 149 residues: MSAAEIDIRKILKLLPHRYPFLLVDRVLEFEAQKRIKTLKNVTINEPYFQGHFPEQPVMPGVMILEALAQSAGLLTFGADMERKEGALYYFVGIDGARFKQVVYPGDQLHMNVTVERYIRGIWKFKAFATVDDKVACEAELMCTVKQAE.

Residue histidine 52 is part of the active site.

It belongs to the thioester dehydratase family. FabZ subfamily.

The protein resides in the cytoplasm. It catalyses the reaction a (3R)-hydroxyacyl-[ACP] = a (2E)-enoyl-[ACP] + H2O. Its function is as follows. Involved in unsaturated fatty acids biosynthesis. Catalyzes the dehydration of short chain beta-hydroxyacyl-ACPs and long chain saturated and unsaturated beta-hydroxyacyl-ACPs. In Cupriavidus necator (strain ATCC 17699 / DSM 428 / KCTC 22496 / NCIMB 10442 / H16 / Stanier 337) (Ralstonia eutropha), this protein is 3-hydroxyacyl-[acyl-carrier-protein] dehydratase FabZ.